Reading from the N-terminus, the 205-residue chain is MIGRLKGILIEKQPPYLLLDVNGVGYELQAPMTTFYRLPSLGHEVVLHTHLSITENLHQLFGFAEQRDRSLFRTLIKVNGVGPKLAVAILSGMESDDIARCVRDNNIKALTRVPGIGQKTAERLVIELRDRLKNWDLPQGDMLAHGEIQAIASDNDIYAEAESALIALGYKPVDAAKMVASAAKQKPEARSEELIRIALRSLAGV.

Residues 1-64 (MIGRLKGILI…ENLHQLFGFA (64 aa)) are domain I. The domain II stretch occupies residues 65–143 (EQRDRSLFRT…NWDLPQGDML (79 aa)). The tract at residues 144–153 (AHGEIQAIAS) is flexible linker. A domain III region spans residues 153-205 (SDNDIYAEAESALIALGYKPVDAAKMVASAAKQKPEARSEELIRIALRSLAGV).

The protein belongs to the RuvA family. Homotetramer. Forms an RuvA(8)-RuvB(12)-Holliday junction (HJ) complex. HJ DNA is sandwiched between 2 RuvA tetramers; dsDNA enters through RuvA and exits via RuvB. An RuvB hexamer assembles on each DNA strand where it exits the tetramer. Each RuvB hexamer is contacted by two RuvA subunits (via domain III) on 2 adjacent RuvB subunits; this complex drives branch migration. In the full resolvosome a probable DNA-RuvA(4)-RuvB(12)-RuvC(2) complex forms which resolves the HJ.

It is found in the cytoplasm. The RuvA-RuvB-RuvC complex processes Holliday junction (HJ) DNA during genetic recombination and DNA repair, while the RuvA-RuvB complex plays an important role in the rescue of blocked DNA replication forks via replication fork reversal (RFR). RuvA specifically binds to HJ cruciform DNA, conferring on it an open structure. The RuvB hexamer acts as an ATP-dependent pump, pulling dsDNA into and through the RuvAB complex. HJ branch migration allows RuvC to scan DNA until it finds its consensus sequence, where it cleaves and resolves the cruciform DNA. The chain is Holliday junction branch migration complex subunit RuvA from Cellvibrio japonicus (strain Ueda107) (Pseudomonas fluorescens subsp. cellulosa).